The primary structure comprises 865 residues: Adenylate cyclase (865 aa).

The tract at residues 1 to 540 (MYLYIETLKQ…DISSHFPIRL (540 aa)) is catalytic. The segment at 546-865 (KALYSPCEIR…FNDYQAVHHH (320 aa)) is regulatory.

The protein belongs to the adenylyl cyclase class-1 family.

The protein localises to the cytoplasm. It carries out the reaction ATP = 3',5'-cyclic AMP + diphosphate. The polypeptide is Adenylate cyclase (cya) (Proteus mirabilis).